A 531-amino-acid polypeptide reads, in one-letter code: Polyamine aminopropyltransferase 1 (531 aa).

7 helical membrane passes run 27-47, 59-79, 96-116, 122-142, 160-180, 188-208, and 218-238; these read FLLLLAVFLCAACGLVYELAL, VLQTSVVISVMVFAMGVGSLA, GVLALVGGLSVLMLYAAFAWL, AMIVVSLVVGLLIGAEIPLLM, MFAVDYIGALVGGLCFPLFLL, GALVVGVVNAVAGVIVVVFIF, and AGLLAGVALVLAALGTTYVLA. The tract at residues 205 to 476 is spermidine synthase; the sequence is VFIFRRQTGR…VLARPGTEAP (272 aa). One can recognise a PABS domain in the interval 233 to 471; sequence TTYVLADDLE…GNWGFVLARP (239 aa). Gln263 is a binding site for S-methyl-5'-thioadenosine. Spermidine-binding residues include His298 and Asp320. S-methyl-5'-thioadenosine-binding positions include Glu340 and 374–375; that span reads DA. The active-site Proton acceptor is Asp392.

It belongs to the spermidine/spermine synthase family. As to quaternary structure, homodimer or homotetramer.

It localises to the cell membrane. The enzyme catalyses S-adenosyl 3-(methylsulfanyl)propylamine + putrescine = S-methyl-5'-thioadenosine + spermidine + H(+). The protein operates within amine and polyamine biosynthesis; spermidine biosynthesis; spermidine from putrescine: step 1/1. Catalyzes the irreversible transfer of a propylamine group from the amino donor S-adenosylmethioninamine (decarboxy-AdoMet) to putrescine (1,4-diaminobutane) to yield spermidine. In Streptomyces coelicolor (strain ATCC BAA-471 / A3(2) / M145), this protein is Polyamine aminopropyltransferase 1.